The primary structure comprises 322 residues: Undecaprenyl-phosphate 4-deoxy-4-formamido-L-arabinose transferase (322 aa).

Residues 1 to 235 (MFEIHPVKKV…TCLTTTPLRM (235 aa)) are Cytoplasmic-facing. A helical membrane pass occupies residues 236-256 (LSLLGSIIAIGGFSIAVLLVI). Over 257–269 (LRLTFGPQWAAEG) the chain is Periplasmic. The chain crosses the membrane as a helical span at residues 270-290 (VFMLFAVLFTFIGAQFIGMGL). Residues 291 to 322 (LGEYIGRIYTDVRARPRYFVQQVIRPSSKENE) lie on the Cytoplasmic side of the membrane.

The protein belongs to the glycosyltransferase 2 family.

Its subcellular location is the cell inner membrane. The catalysed reaction is UDP-4-deoxy-4-formamido-beta-L-arabinose + di-trans,octa-cis-undecaprenyl phosphate = 4-deoxy-4-formamido-alpha-L-arabinopyranosyl di-trans,octa-cis-undecaprenyl phosphate + UDP. It participates in glycolipid biosynthesis; 4-amino-4-deoxy-alpha-L-arabinose undecaprenyl phosphate biosynthesis; 4-amino-4-deoxy-alpha-L-arabinose undecaprenyl phosphate from UDP-4-deoxy-4-formamido-beta-L-arabinose and undecaprenyl phosphate: step 1/2. It functions in the pathway bacterial outer membrane biogenesis; lipopolysaccharide biosynthesis. In terms of biological role, catalyzes the transfer of 4-deoxy-4-formamido-L-arabinose from UDP to undecaprenyl phosphate. The modified arabinose is attached to lipid A and is required for resistance to polymyxin and cationic antimicrobial peptides. This chain is Undecaprenyl-phosphate 4-deoxy-4-formamido-L-arabinose transferase, found in Shigella sonnei (strain Ss046).